The following is a 195-amino-acid chain: Putative kinase protein 143R (195 aa).

8-16 (GIIGAGKST) is an ATP binding site. Residues Glu-31, Tyr-43, and Gln-54 each coordinate substrate. Glu-78 serves as the catalytic Proton acceptor. The substrate site is built by Arg-79 and Glu-142.

This sequence belongs to the DCK/DGK family.

The protein is Putative kinase protein 143R of Acheta domesticus (House cricket).